A 190-amino-acid chain; its full sequence is Imidazoleglycerol-phosphate dehydratase (190 aa).

This sequence belongs to the imidazoleglycerol-phosphate dehydratase family.

It localises to the cytoplasm. The enzyme catalyses D-erythro-1-(imidazol-4-yl)glycerol 3-phosphate = 3-(imidazol-4-yl)-2-oxopropyl phosphate + H2O. It participates in amino-acid biosynthesis; L-histidine biosynthesis; L-histidine from 5-phospho-alpha-D-ribose 1-diphosphate: step 6/9. The polypeptide is Imidazoleglycerol-phosphate dehydratase (Sulfurimonas denitrificans (strain ATCC 33889 / DSM 1251) (Thiomicrospira denitrificans (strain ATCC 33889 / DSM 1251))).